Here is a 414-residue protein sequence, read N- to C-terminus: MKQYKILLIVADGLGDRPVSKLNGLTPLEAANKPAITDLLKNSMIGLMDPISPGIIPGSDTSHLSIFGLDPHVYYRGRGAFEALGAGATLSHGDVAFRGNFATVNNDLVVVDRRAGRKLEEGEQLVKELNEKIKEINDVKIKFYKGTEHRIAVVLSGKGISDKVSDTDPHHEGLKVLESKPLEDSNEAIRTAEIINILTRKVFDVLNSSEINKRRIEQGEKPANIVLLRGAAHYVKLPPFSSYTKLKAAAVSATALIKGICRELGMNVITPSGATGGIDTNYNAKAKAAIELLKENDFVFLHIKATDAASHDGLVEEKVKAIERIDRVIGAIIDNIGRDNLILMFTGDHVTPVEIKEHTGDPVPVLLYVPYPIINDNVGDFNEKEARKGSLRIRGLDVTNILLNYSNRAEKYGS.

This sequence belongs to the BPG-independent phosphoglycerate mutase family. A-PGAM subfamily.

The enzyme catalyses (2R)-2-phosphoglycerate = (2R)-3-phosphoglycerate. The protein operates within carbohydrate degradation; glycolysis; pyruvate from D-glyceraldehyde 3-phosphate: step 3/5. Catalyzes the interconversion of 2-phosphoglycerate and 3-phosphoglycerate. The polypeptide is 2,3-bisphosphoglycerate-independent phosphoglycerate mutase (Saccharolobus solfataricus (strain ATCC 35092 / DSM 1617 / JCM 11322 / P2) (Sulfolobus solfataricus)).